We begin with the raw amino-acid sequence, 611 residues long: DNA mismatch repair protein MutL (611 aa).

The protein belongs to the DNA mismatch repair MutL/HexB family.

In terms of biological role, this protein is involved in the repair of mismatches in DNA. It is required for dam-dependent methyl-directed DNA mismatch repair. May act as a 'molecular matchmaker', a protein that promotes the formation of a stable complex between two or more DNA-binding proteins in an ATP-dependent manner without itself being part of a final effector complex. This chain is DNA mismatch repair protein MutL, found in Rickettsia bellii (strain RML369-C).